The chain runs to 413 residues: Multifunctional CCA protein (413 aa).

2 residues coordinate ATP: Gly8 and Arg11. CTP contacts are provided by Gly8 and Arg11. Mg(2+) is bound by residues Asp21 and Asp23. 3 residues coordinate ATP: Arg91, Arg137, and Arg140. 3 residues coordinate CTP: Arg91, Arg137, and Arg140. Residues 228 to 329 (TGVHTLMTLS…VKLFDAIDAW (102 aa)) form the HD domain.

Belongs to the tRNA nucleotidyltransferase/poly(A) polymerase family. Bacterial CCA-adding enzyme type 1 subfamily. In terms of assembly, monomer. Can also form homodimers and oligomers. Mg(2+) is required as a cofactor. Ni(2+) serves as cofactor.

The enzyme catalyses a tRNA precursor + 2 CTP + ATP = a tRNA with a 3' CCA end + 3 diphosphate. It catalyses the reaction a tRNA with a 3' CCA end + 2 CTP + ATP = a tRNA with a 3' CCACCA end + 3 diphosphate. Functionally, catalyzes the addition and repair of the essential 3'-terminal CCA sequence in tRNAs without using a nucleic acid template. Adds these three nucleotides in the order of C, C, and A to the tRNA nucleotide-73, using CTP and ATP as substrates and producing inorganic pyrophosphate. tRNA 3'-terminal CCA addition is required both for tRNA processing and repair. Also involved in tRNA surveillance by mediating tandem CCA addition to generate a CCACCA at the 3' terminus of unstable tRNAs. While stable tRNAs receive only 3'-terminal CCA, unstable tRNAs are marked with CCACCA and rapidly degraded. In Salmonella choleraesuis (strain SC-B67), this protein is Multifunctional CCA protein.